The sequence spans 391 residues: Multidrug resistance protein MdtL (391 aa).

Topologically, residues 1-3 are cytoplasmic; the sequence is MSR. Residues 4–24 form a helical membrane-spanning segment; the sequence is FLICSFALVLLYPAGIDMYLV. The Periplasmic portion of the chain corresponds to 25 to 41; that stretch reads GLPRIAADLNASEAQLH. Residues 42-62 form a helical membrane-spanning segment; that stretch reads IAFSVYLAGMAAAMLFAGKVA. The Cytoplasmic portion of the chain corresponds to 63–68; the sequence is DRSGRK. Residues 69–89 traverse the membrane as a helical segment; it reads PVAIPGAALFIIASVFCSLAE. Residues 90–92 are Periplasmic-facing; sequence TSA. The helical transmembrane segment at 93 to 113 threads the bilayer; that stretch reads LFLAGRFLQGLGAGCCYVVAF. The Cytoplasmic segment spans residues 114–130; sequence AILRDTLDDRRRAKVLS. Residues 131–151 form a helical membrane-spanning segment; sequence LLNGITCIIPVLAPVLGHLIM. At 152–157 the chain is on the periplasmic side; the sequence is LKFPWQ. A helical transmembrane segment spans residues 158 to 178; the sequence is SLFWTMATMGIAVLMLSLFIL. The Cytoplasmic portion of the chain corresponds to 179 to 202; it reads KETRPAAPAASDKPRENSESLLNR. Residues 203 to 222 form a helical membrane-spanning segment; sequence FFLSRVVITTLSVSVILTFV. Topologically, residues 223–244 are periplasmic; sequence NTSPVLLMEIMGFERGEYATIM. A helical transmembrane segment spans residues 245–265; sequence ALTAGVSMTVSFSTPFALGIF. The Cytoplasmic segment spans residues 266–268; it reads KPR. The chain crosses the membrane as a helical span at residues 269-289; that stretch reads TLMITSQVLFLAAGITLAVSP. Residues 290–292 lie on the Periplasmic side of the membrane; sequence SHA. A helical transmembrane segment spans residues 293 to 313; that stretch reads VSLFGITLICAGFSVGFGVAM. At 314-330 the chain is on the cytoplasmic side; the sequence is SQALGPFSLRAGVASST. A helical transmembrane segment spans residues 331 to 351; the sequence is LGIAQVCGSSLWIWLAAVVGI. The Periplasmic segment spans residues 352 to 355; it reads GAWN. The chain crosses the membrane as a helical span at residues 356 to 376; the sequence is MLIGILIACSIVSLLLIMFVA. Residues 377–391 are Cytoplasmic-facing; that stretch reads PGRPVAAHEEIHHHA.

It belongs to the major facilitator superfamily. DHA1 family. MdtL (TC 2.A.1.2.22) subfamily.

Its subcellular location is the cell inner membrane. In terms of biological role, confers resistance to chloramphenicol. This chain is Multidrug resistance protein MdtL, found in Escherichia coli O6:K15:H31 (strain 536 / UPEC).